The primary structure comprises 250 residues: Cell division protein FtsQ (250 aa).

Residues 1–11 (MWNNVRQLNLA) are Cytoplasmic-facing. The chain crosses the membrane as a helical span at residues 12–32 (ASALYALLLLVLAAAGCYWLI). At 33 to 250 (QRPAFALREI…FLTDTDKGKK (218 aa)) the chain is on the periplasmic side. One can recognise a POTRA domain in the interval 37–106 (FALREIRIDG…NALAVTLEEY (70 aa)).

The protein belongs to the FtsQ/DivIB family. FtsQ subfamily. In terms of assembly, part of a complex composed of FtsB, FtsL and FtsQ.

The protein localises to the cell inner membrane. Its function is as follows. Essential cell division protein. May link together the upstream cell division proteins, which are predominantly cytoplasmic, with the downstream cell division proteins, which are predominantly periplasmic. May control correct divisome assembly. This Burkholderia pseudomallei (strain K96243) protein is Cell division protein FtsQ.